The chain runs to 476 residues: Inactive glucose-1-phosphate adenylyltransferase small subunit 2, chloroplastic (476 aa).

A chloroplast-targeting transit peptide spans 1–55 (MQISSSSFITKFTNLHMVRSTSDHHQWRHNYNLKQLFIPNLSVSNSQHLPLNQSV).

This sequence belongs to the bacterial/plant glucose-1-phosphate adenylyltransferase family. In terms of assembly, heterotetramer. As to expression, expressed at very low levels in leaves, inflorescences, fruits, and roots.

It localises to the plastid. Its subcellular location is the chloroplast. This chain is Inactive glucose-1-phosphate adenylyltransferase small subunit 2, chloroplastic, found in Arabidopsis thaliana (Mouse-ear cress).